The following is a 249-amino-acid chain: MKLNISFPATGCQKLIEVDDERKLRTFYEKRMATEVAADPLGDEWKGYMVRISGGNDKQGFPMKQGVLTHGRVRLLLAKGHSCYRPRRTGERKRKSVRGCIGDANLSVLNLVIIKKGEKDIPGLTDSTVPRRLGPKRASKIRKLFNLAKEDDVRQYVVRRPLTKEGKKPRTKAPRIQRLVTPRVLQHKRRRIALKKQRTQKNKEEASEYAKLLAKRMKEAKEKRQEQIAKRRRLSSLRASTSKSESSQK.

Positions 216 to 229 (RMKEAKEKRQEQIA) are enriched in basic and acidic residues. The segment at 216-249 (RMKEAKEKRQEQIAKRRRLSSLRASTSKSESSQK) is disordered. Phosphoserine is present on residues Ser235, Ser236, Ser240, Ser244, and Ser247. Positions 236 to 249 (SLRASTSKSESSQK) are enriched in low complexity.

This sequence belongs to the eukaryotic ribosomal protein eS6 family. As to quaternary structure, component of the small ribosomal subunit. Ribosomal protein S6 is the major substrate of protein kinases in eukaryote ribosomes. The phosphorylation is stimulated by growth factors, tumor promoting agents, and mitogens. It is dephosphorylated at growth arrest.

Its subcellular location is the cytoplasm. Functionally, component of the 40S small ribosomal subunit. Plays an important role in controlling cell growth and proliferation through the selective translation of particular classes of mRNA. The sequence is that of Small ribosomal subunit protein eS6 (rps6) from Oncorhynchus mykiss (Rainbow trout).